The chain runs to 479 residues: uncharacterized protein (479 aa).

The next 10 helical transmembrane spans lie at 11 to 31 (ILMAIPLITFLLPAPDGLSLI), 43 to 63 (IVGLVLKPYGEPVILLAAIAV), 90 to 110 (GTTWLIFTAFTLSSAFVITGL), 151 to 171 (SGGIIFPIINSVVVALGSDPE), 195 to 215 (IFLTAMAPNALALSLMAPILG), 223 to 243 (WFLAASVPGLLCLFLIPLICY), 274 to 294 (KALSVLFVIALFGWIFSNSLH), 295 to 315 (INATIVAIIVMVLCIVLSIVT), 328 to 348 (TLVWYGGIIGMSGLLEKSGFF), and 447 to 467 (WWITGAIIAFGSLIIHLTIGM).

It belongs to the SLC13A/DASS transporter (TC 2.A.47) family. DIT1 subfamily.

Its subcellular location is the cell inner membrane. This is an uncharacterized protein from Haemophilus influenzae (strain ATCC 51907 / DSM 11121 / KW20 / Rd).